The primary structure comprises 205 residues: ATP phosphoribosyltransferase (205 aa).

Belongs to the ATP phosphoribosyltransferase family. Short subfamily. As to quaternary structure, heteromultimer composed of HisG and HisZ subunits.

It is found in the cytoplasm. It carries out the reaction 1-(5-phospho-beta-D-ribosyl)-ATP + diphosphate = 5-phospho-alpha-D-ribose 1-diphosphate + ATP. Its pathway is amino-acid biosynthesis; L-histidine biosynthesis; L-histidine from 5-phospho-alpha-D-ribose 1-diphosphate: step 1/9. In terms of biological role, catalyzes the condensation of ATP and 5-phosphoribose 1-diphosphate to form N'-(5'-phosphoribosyl)-ATP (PR-ATP). Has a crucial role in the pathway because the rate of histidine biosynthesis seems to be controlled primarily by regulation of HisG enzymatic activity. This Vesicomyosocius okutanii subsp. Calyptogena okutanii (strain HA) protein is ATP phosphoribosyltransferase.